The sequence spans 155 residues: Peptide deformylase (155 aa).

Fe cation-binding residues include Cys88 and His130. Glu131 is a catalytic residue. His134 is a Fe cation binding site.

The protein belongs to the polypeptide deformylase family. Fe(2+) is required as a cofactor.

It carries out the reaction N-terminal N-formyl-L-methionyl-[peptide] + H2O = N-terminal L-methionyl-[peptide] + formate. Functionally, removes the formyl group from the N-terminal Met of newly synthesized proteins. Requires at least a dipeptide for an efficient rate of reaction. N-terminal L-methionine is a prerequisite for activity but the enzyme has broad specificity at other positions. In Pelotomaculum thermopropionicum (strain DSM 13744 / JCM 10971 / SI), this protein is Peptide deformylase.